A 167-amino-acid chain; its full sequence is RNA pyrophosphohydrolase (167 aa).

One can recognise a Nudix hydrolase domain in the interval 7-160; the sequence is PYRPCVGVMV…KRRAYEEVVA (154 aa). Positions 48–69 match the Nudix box motif; sequence GGIDEGEDPLEAACRELYEETG.

The protein belongs to the Nudix hydrolase family. RppH subfamily. A divalent metal cation is required as a cofactor.

Accelerates the degradation of transcripts by removing pyrophosphate from the 5'-end of triphosphorylated RNA, leading to a more labile monophosphorylated state that can stimulate subsequent ribonuclease cleavage. The chain is RNA pyrophosphohydrolase from Rhizobium meliloti (strain 1021) (Ensifer meliloti).